The chain runs to 714 residues: MLHLKVQFLDDSQKIFVVDQKSSGKALFNLSCSHLNLAEKEYFGLEFCSHSGNNVWLELLKPITKQVKNPKEIVFKFMVKFFPVDPGHLREELTRYLFTLQIKKDLALGRLPCSDNCTALMVSHILQSELGDFHEETDRKHLAQTRYLPNQDCLEGKIMHFHQKHIGRSPAESDILLLDIARKLDMYGIRPHPASDGEGMQIHLAVAHMGVLVLRGNTKINTFNWAKIRKLSFKRKHFLIKLHANILVLCKDTLEFTMASRDACKAFWKTCVEYHAFFRLSEEPKSKPKTLLCSKGSSFRYSGRTQRQLLEYGRKGRLKSLPFERKHYPSQYHERQCRSSPDLLSDVSKQVEDLRLAYGGGYYQNVNGVHASEPVLESRRRNSALEVTFATELEHSKPEADPTLLHQSQSSSSFPFIYMDPVFNTEPNPNPDPRDIFSERSSLSSFQTSCKFSGNHMSIYSGLTSKVRPAKQLTYTDVPYIPCTGQQVGIMPPQVFFYVDKPPQVPRWSPIRAEERTSPHSYVEPTAMKPAERSPRNIRMKSFQQDLQVLQEAIARTSGRSNINVGLEEEDPNLEDAFVCNIQEQTPKRSQSQSDMKTIRFPFGSEFRPLGPCPALSHKADLFTDMFAEQELPAVLMDQSTAERYVASESSDSESEILKPDYYALYGKEIRSPMARIRLSSGSLQLDEEDEDAYFNTPTAEDRTSLKPCNYFLA.

The FERM domain occupies 2-282; it reads LHLKVQFLDD…EYHAFFRLSE (281 aa). The stretch at 537-558 forms a coiled coil; sequence NIRMKSFQQDLQVLQEAIARTS.

In terms of tissue distribution, expressed in liver, kidney, pancreas and at low levels in brain and heart. Expressed in embryonic brain and developing neural retina.

It is found in the cell projection. Its subcellular location is the neuron projection. The protein localises to the growth cone. Its function is as follows. Plays a role in neurite development, may be through the activation of the GTPase RAC1. Plays a role in the control of eye movement and gaze stability. This chain is FERM domain-containing protein 7 (FRMD7), found in Homo sapiens (Human).